Consider the following 504-residue polypeptide: Kinesin light chain 3 (504 aa).

Positions 90-150 (ALSAHVGALE…EEEKRHLEFL (61 aa)) form a coiled coil. Positions 153 to 197 (LRQYDPPAESQQSESPPRRDSLASLFPSEEEERKGPEAAGAAAAQ) are disordered. The segment covering 158-167 (PPAESQQSES) has biased composition (low complexity). S173 is subject to Phosphoserine. TPR repeat units follow at residues 207-240 (LRTL…LERS), 249-282 (ATML…REQT), 291-324 (AATL…REKV), 333-366 (AKQL…YEAL), and 375-408 (AKTK…EDLP). The disordered stretch occupies residues 411-438 (LGAPNTGTAGDAEQALRRSSSLSKIRES). The residue at position 466 (S466) is a Phosphoserine. The disordered stretch occupies residues 472–504 (VDAPRAPGTQFPSWHLDKAPRTLSASTQDLSPH). The span at 494 to 504 (LSASTQDLSPH) shows a compositional bias: polar residues. Position 498 is a phosphothreonine (T498). S502 is subject to Phosphoserine.

It belongs to the kinesin light chain family. As to quaternary structure, oligomer composed of two heavy chains and two light chains. Associates with microtubulin in an ATP-dependent manner. Interacts with KIF5C. Interacts with ODF1. Interacts with LRGUK. Interacts with VDAC2.

The protein localises to the cytoplasm. The protein resides in the cytoskeleton. It is found in the mitochondrion. Kinesin is a microtubule-associated force-producing protein that may play a role in organelle transport. Plays a role during spermiogenesis in the development of the sperm tail midpiece and in the normal function of spermatozoa. May play a role in the formation of the mitochondrial sheath formation in the developing spermatid midpiece. In Homo sapiens (Human), this protein is Kinesin light chain 3 (KLC3).